Consider the following 121-residue polypeptide: Basic phospholipase A2 daboxin P (121 aa).

7 cysteine pairs are disulfide-bonded: cysteine 26–cysteine 115, cysteine 28–cysteine 44, cysteine 43–cysteine 95, cysteine 49–cysteine 121, cysteine 50–cysteine 88, cysteine 57–cysteine 81, and cysteine 75–cysteine 86. Ca(2+) contacts are provided by tyrosine 27, glycine 29, and glycine 31. The active site involves histidine 47. Ca(2+) is bound at residue aspartate 48. Aspartate 89 is a catalytic residue.

Requires Ca(2+) as cofactor. As to expression, expressed by the venom gland.

It is found in the secreted. It catalyses the reaction a 1,2-diacyl-sn-glycero-3-phosphocholine + H2O = a 1-acyl-sn-glycero-3-phosphocholine + a fatty acid + H(+). In terms of biological role, snake venom phospholipase A2 (PLA2) that exhibits anticoagulant activity, probably by binding to factor X and its activated form factor Xa (F10). Shows no cytotoxicity. PLA2 catalyzes the calcium-dependent hydrolysis of the 2-acyl groups in 3-sn-phosphoglycerides. The chain is Basic phospholipase A2 daboxin P from Daboia russelii (Russel's viper).